Reading from the N-terminus, the 189-residue chain is Nucleoside diphosphate kinase 6 (189 aa).

ATP contacts are provided by Lys19, Phe68, Arg96, Thr102, Arg116, and Asn126. His129 acts as the Pros-phosphohistidine intermediate in catalysis.

Belongs to the NDK family. Requires Mg(2+) as cofactor.

It catalyses the reaction a 2'-deoxyribonucleoside 5'-diphosphate + ATP = a 2'-deoxyribonucleoside 5'-triphosphate + ADP. The enzyme catalyses a ribonucleoside 5'-diphosphate + ATP = a ribonucleoside 5'-triphosphate + ADP. In terms of biological role, major role in the synthesis of nucleoside triphosphates other than ATP. The ATP gamma phosphate is transferred to the NDP beta phosphate via a ping-pong mechanism, using a phosphorylated active-site intermediate. This Mus musculus (Mouse) protein is Nucleoside diphosphate kinase 6 (Nme6).